We begin with the raw amino-acid sequence, 261 residues long: DNA repair protein RecO (261 aa).

The protein belongs to the RecO family.

Involved in DNA repair and RecF pathway recombination. The polypeptide is DNA repair protein RecO (Mycobacteroides abscessus (strain ATCC 19977 / DSM 44196 / CCUG 20993 / CIP 104536 / JCM 13569 / NCTC 13031 / TMC 1543 / L948) (Mycobacterium abscessus)).